Reading from the N-terminus, the 255-residue chain is SKA complex subunit 1 (255 aa).

Ala2 carries the post-translational modification N-acetylalanine. Residues 49 to 91 (INELLNKLELEIQYQEQTNNSLKELCESLEEDYKDIEHLKENV) are a coiled coil. The interval 92-132 (PSHLPQVTVTQSCVKGSDLDPEEPIKVEEPEPVKKPPKEQR) is flexiple loop that anchors MAPRE1. The SXLP motif; mediates interaction with MAPRE1, targeting to microtubule plus ends, stabilization on kinetochores and is required for proper chromosome alignment to the metaphase plate signature appears at 93–96 (SHLP). The disordered stretch occupies residues 106-131 (KGSDLDPEEPIKVEEPEPVKKPPKEQ). Over residues 114-131 (EPIKVEEPEPVKKPPKEQ) the composition is skewed to basic and acidic residues. The binds microtubules and protein phosphatase PP1 subunit PPP1CA stretch occupies residues 132–255 (RSIKEMPFIT…GGGLTRYVIT (124 aa)). Thr157 is modified (phosphothreonine; by AURKB). Position 242 is a phosphoserine; by AURKB (Ser242).

It belongs to the SKA1 family. In terms of assembly, component of the SKA complex, composed of SKA1, SKA2 and SKA3. The SKA complex is a homodimer organized around a central W-shaped coiled-coil structure, formed by the interacting domains of SKA1, SKA2, and SKA3, each end of the 'W' is extended further by the C-terminal microtubule-binding domains of SKA1 and SKA3; the complex forms extended structures on microtubules. Interacts (via SXLP motif) with MAPRE1 (via C-terminus); the interaction is direct and stabilizes the kinetochore-microtubule attachment of the SKA1 complex. Interacts (via C-terminus) with protein phosphatase PP1 subunit PPP1CA; the interaction is direct and required for recruitment of PPP1CA to the kinetochore. Interacts with the NDC80 complex; the interaction is required to establish kinetochore-microtubule end-on attachments. Post-translationally, phosphorylated by AURKB at Thr-157 and Ser-242 which negatively regulates the association of the SKA complex with kinetochores to allow correction of aberrant kinetochore-microtubule interactions and promote mitotic sister chromatid biorientation.

It localises to the cytoplasm. It is found in the cytoskeleton. The protein resides in the spindle. Its subcellular location is the chromosome. The protein localises to the centromere. It localises to the kinetochore. It is found in the microtubule organizing center. The protein resides in the centrosome. Its function is as follows. Component of the SKA complex, a microtubule plus end-binding complex of the outer kinetochore that stabilizes spindle microtubule-kinetochore attachments, promotes alignment of chromosomes at the mitotic spindle equator (chromosome congression) and assists suppression of the spindle assembly checkpoint. Kinetochores, consisting of a centromere-associated inner segment and a microtubule-contacting outer segment, play a crucial role in chromosome segregation by mediating the physical connection between centromeric DNA and spindle microtubules. The outer kinetochore is made up of the ten-subunit KMN network complex, comprising the MIS12, NDC80 and KNL1 complexes, and auxiliary microtubule-associated components such as the SKA complex; together they connect the outer kinetochore with the inner kinetochore, bind microtubules, and mediate interactions with mitotic checkpoint proteins that delay anaphase until chromosomes are bioriented on the spindle. The SKA complex is loaded onto bioriented kinetochores and it facilitates chromosome congression by stabilizing microtubules together with MAPRE1, and end-on attachment of the NDC80 complex to depolymerizing spindle microtubules, thereby assisting the poleward-moving kinetochore in withstanding microtubule pulling forces. The complex associates with dynamic microtubule plus-ends and can track both depolymerizing and elongating microtubules. The complex recruits protein phosphatase 1 (PP1) to the kinetochore in prometaphase and metaphase, to oppose spindle assembly checkpoint signaling and promote the onset of anaphase. In the complex, it mediates interactions with microtubules. It also stimulates AURKB/Aurora B catalytic activity. During meiosis the SKA complex stabilizes the meiotic spindle and is required for its migration to the cortex. This is SKA complex subunit 1 (SKA1) from Homo sapiens (Human).